Reading from the N-terminus, the 224-residue chain is UPF0758 protein PSHAa2643 (224 aa).

In terms of domain architecture, MPN spans Ile-102–Ile-224. Positions 173, 175, and 186 each coordinate Zn(2+). The short motif at His-173–Asp-186 is the JAMM motif element.

This sequence belongs to the UPF0758 family.

This is UPF0758 protein PSHAa2643 from Pseudoalteromonas translucida (strain TAC 125).